A 657-amino-acid chain; its full sequence is Glycogen debranching enzyme (657 aa).

Catalysis depends on Asp-336, which acts as the Nucleophile. Catalysis depends on Glu-371, which acts as the Proton donor. The span at 458-467 (NEANGEENRD) shows a compositional bias: basic and acidic residues. A disordered region spans residues 458–479 (NEANGEENRDGTNNNYSNNHGK).

This sequence belongs to the glycosyl hydrolase 13 family.

It catalyses the reaction Hydrolysis of (1-&gt;6)-alpha-D-glucosidic linkages to branches with degrees of polymerization of three or four glucose residues in limit dextrin.. It participates in glycan degradation; glycogen degradation. In terms of biological role, removes maltotriose and maltotetraose chains that are attached by 1,6-alpha-linkage to the limit dextrin main chain, generating a debranched limit dextrin. This is Glycogen debranching enzyme from Escherichia coli (strain 55989 / EAEC).